We begin with the raw amino-acid sequence, 232 residues long: Histone H1.X (232 aa).

Residues 36-112 (HHPSYMDMIK…GATGSFRMGK (77 aa)) form the H15 domain. The segment at 142–232 (ISKAEKTKPS…LRTGTRKSYC (91 aa)) is disordered. The span at 159–197 (KKGKPISTMKKRGVMSKKRSSKNKMAPKAKSHGLKKKGP) shows a compositional bias: basic residues.

The protein belongs to the histone H1/H5 family.

Its subcellular location is the nucleus. It is found in the chromosome. This Caenorhabditis elegans protein is Histone H1.X (hil-1).